The sequence spans 273 residues: Proteasome subunit beta type-7-A (273 aa).

Residues 1 to 37 (MSQSTVDVPPKGGFSFDLCKRNDMLTQKGLKAPSFLK) constitute a propeptide, removed in mature form. Catalysis depends on threonine 40, which acts as the Nucleophile.

It belongs to the peptidase T1B family. In terms of assembly, component of the 20S core complex of the 26S proteasome. The 26S proteasome is composed of a core protease (CP), known as the 20S proteasome, capped at one or both ends by the 19S regulatory particle (RP/PA700). The 20S proteasome core is composed of 28 subunits that are arranged in four stacked rings, resulting in a barrel-shaped structure. The two end rings are each formed by seven alpha subunits, and the two central rings are each formed by seven beta subunits. The catalytic chamber with the active sites is on the inside of the barrel.

Its subcellular location is the cytoplasm. The protein localises to the nucleus. The catalysed reaction is Cleavage of peptide bonds with very broad specificity.. The proteasome is a multicatalytic proteinase complex which is characterized by its ability to cleave peptides with Arg, Phe, Tyr, Leu, and Glu adjacent to the leaving group at neutral or slightly basic pH. The proteasome has an ATP-dependent proteolytic activity. The chain is Proteasome subunit beta type-7-A (PBB1) from Arabidopsis thaliana (Mouse-ear cress).